A 220-amino-acid polypeptide reads, in one-letter code: N-(5'-phosphoribosyl)anthranilate isomerase (220 aa).

It belongs to the TrpF family.

The catalysed reaction is N-(5-phospho-beta-D-ribosyl)anthranilate = 1-(2-carboxyphenylamino)-1-deoxy-D-ribulose 5-phosphate. It participates in amino-acid biosynthesis; L-tryptophan biosynthesis; L-tryptophan from chorismate: step 3/5. This chain is N-(5'-phosphoribosyl)anthranilate isomerase, found in Xylella fastidiosa (strain 9a5c).